The primary structure comprises 366 residues: MARERPPGRGCGVLRRCLLGAVLLFGLRLCAELRRAGPGSPTRSAPPGPAWRPPGPHLPPAPGQPRGASRRQVTYVRSGRRAPPGGGGSGTPEPGCCAPRGRPRRKGPRWHIDLQPWAGSAQSLDEEAWRFLRYISTTQIACNHMNTDSLATDSSPTHKPWSVCLDDRFNLAHQIRNKQCRLYSLGLGSDDTHFEVSMANNGCEVHRFDPSVKSAHILESQHLWYHRLSIDWRDPHPAVAAQKPHSNTRKLGSILNEFGHHKIDVLKADLESAEWKVLENLILEDVLEQIGQLIFEIHLHWPGFEVSGSDSSVVRFWYSLLKELEQKDFRLFHSYKDLSKPQLFLKKDIFNASSCYTLSWVNTRWK.

An N-terminal signal peptide occupies residues 1–29; it reads MARERPPGRGCGVLRRCLLGAVLLFGLRL. Residues 36–110 are disordered; that stretch reads AGPGSPTRSA…GRPRRKGPRW (75 aa). Positions 44–63 are enriched in pro residues; sequence SAPPGPAWRPPGPHLPPAPG. A compositionally biased stretch (low complexity) spans 91–100; it reads TPEPGCCAPR.

Belongs to the methyltransferase superfamily.

The protein resides in the secreted. In terms of biological role, probable methyltransferase. In Homo sapiens (Human), this protein is Probable methyltransferase-like protein 24 (METTL24).